Consider the following 43-residue polypeptide: Potassium channel toxin gamma-KTx 4.7 (43 aa).

4 disulfide bridges follow: Cys-5–Cys-23, Cys-11–Cys-34, Cys-20–Cys-39, and Cys-24–Cys-41.

This sequence belongs to the ergtoxin family. Gamma-KTx 4 subfamily. Expressed by the venom gland.

It is found in the secreted. Reversibly blocks Kv11/ERG potassium channels. This chain is Potassium channel toxin gamma-KTx 4.7, found in Centruroides limpidus (Mexican scorpion).